The sequence spans 156 residues: Ribosome maturation factor RimP (156 aa).

It belongs to the RimP family.

The protein resides in the cytoplasm. Its function is as follows. Required for maturation of 30S ribosomal subunits. This chain is Ribosome maturation factor RimP, found in Bacillus cytotoxicus (strain DSM 22905 / CIP 110041 / 391-98 / NVH 391-98).